Here is a 260-residue protein sequence, read N- to C-terminus: Large ribosomal subunit protein uL2y (260 aa).

A disordered region spans residues 227–248 (RRDKSAGAKVGQIAARRTGRRR).

It belongs to the universal ribosomal protein uL2 family.

This Arabidopsis thaliana (Mouse-ear cress) protein is Large ribosomal subunit protein uL2y (RPL8B).